We begin with the raw amino-acid sequence, 285 residues long: Protein HtrL (285 aa).

In Escherichia coli (strain K12), this protein is Protein HtrL.